The sequence spans 747 residues: RNA polymerase II assembly factor rtp1 (747 aa).

HEAT repeat units follow at residues 37 to 75 (NYFL…LLGV), 103 to 141 (QIYN…NCHE), 320 to 358 (DIIR…VCGT), 381 to 418 (SQLA…NVDS), 459 to 485 (EENE…LDLE), 486 to 523 (NPIS…SKDD), and 557 to 594 (INPV…KYDD).

The protein belongs to the Tango6 family. As to quaternary structure, interacts with RNA polymerase II subunits. Interacts with nuclear pore complex subunits.

The protein localises to the cytoplasm. It localises to the nucleus. Required for the cytoplasmic assembly and the nuclear import of RNA polymerase II. This chain is RNA polymerase II assembly factor rtp1, found in Schizosaccharomyces pombe (strain 972 / ATCC 24843) (Fission yeast).